A 189-amino-acid chain; its full sequence is uncharacterized protein (189 aa).

Residues 9-69 form the HTH tetR-type domain; that stretch reads ADTGGRILRA…SMLTSHIAAV (61 aa). Residues 32-51 constitute a DNA-binding region (H-T-H motif); the sequence is TLAEIARRAGVSRPTVYRRW.

This is an uncharacterized protein from Mycobacterium bovis (strain ATCC BAA-935 / AF2122/97).